Consider the following 298-residue polypeptide: UDP-N-acetylenolpyruvoylglucosamine reductase (298 aa).

The 165-residue stretch at Thr-27 to Glu-191 folds into the FAD-binding PCMH-type domain. Arg-170 is an active-site residue. The active-site Proton donor is Ser-220. Glu-290 is an active-site residue.

This sequence belongs to the MurB family. FAD serves as cofactor.

It is found in the cytoplasm. It carries out the reaction UDP-N-acetyl-alpha-D-muramate + NADP(+) = UDP-N-acetyl-3-O-(1-carboxyvinyl)-alpha-D-glucosamine + NADPH + H(+). It functions in the pathway cell wall biogenesis; peptidoglycan biosynthesis. Cell wall formation. This chain is UDP-N-acetylenolpyruvoylglucosamine reductase, found in Listeria innocua serovar 6a (strain ATCC BAA-680 / CLIP 11262).